The following is a 540-amino-acid chain: MTTSLQDGQSAASRAAARDSPLAAQVCGAAQGRGDAHDLAPAPWLHARALLPLPDGTRGCAADRRKKKDLDVPEMPSIPNPFPELCCSPFTSVLSADLFPKANSRKKQVIKVYSEDETSRALDVPSDITARDVCQLLILKNHYIDDHSWTLFEHLPHIGVERTIEDHELVIEVLSNWGIEEENKLYFRKNYAKYEFFKNPMYFFPEHMVSFATETNGEISPTQILQMFLSSSTYPEIHGFLHAKEQGKKSWKKIYFFLRRSGLYFSTKGTSKEPRHLQFFSEFGNSDIYVSLAGKKKHGAPTNYGFCFKPNKAGGPRDLKMLCAEEEQSRTCWVTAIRLLKYGMQLYQNYMHPYQGRSGCSSQSISPMRSISENSLVAMDFSGQKSRVIENPTEALSVAVEEGLAWRKKGCLRLGTHGSPTASSQSSATNMAIHRSQPWFHHKISRDEAQRLIIQQGLVDGVFLVRDSQSNPKTFVLSMSHGQKIKHFQIIPVEDDGEMFHTLDDGHTRFTDLIQLVEFYQLNKGVLPCKLKHYCARIAL.

Thr2 carries the post-translational modification N-acetylthreonine. At Gln9 the chain carries Phosphothreonine. One can recognise a Ras-associating domain in the interval 106–192 (KKQVIKVYSE…NKLYFRKNYA (87 aa)). Residues 234-342 (YPEIHGFLHA…WVTAIRLLKY (109 aa)) form the PH domain. Ser372 and Ser375 each carry phosphoserine. Residues 439 to 535 (WFHHKISRDE…VLPCKLKHYC (97 aa)) form the SH2 domain.

The protein belongs to the GRB7/10/14 family. As to quaternary structure, interacts with the cytoplasmic domain of the autophosphorylated insulin receptor (INSR), through the SH2 domain. Interacts with GRB14 (via BPS domain); this interaction protects the tyrosines in the activation loop on INSR from dephosphorylation. Binds to the ankyrin repeat region of TNKS2 via its N-terminus. Interacts with activated NRAS. Interacts (via SH2 domain) with TEK/TIE2 (tyrosine phosphorylated). Post-translationally, phosphorylated on serine residues. Phosphorylated on tyrosine residues by TEK/TIE2. In terms of tissue distribution, expressed at high levels in the liver, kidney, pancreas, testis, ovary, heart and skeletal muscle.

It is found in the cytoplasm. Its subcellular location is the endosome membrane. Functionally, adapter protein which modulates coupling of cell surface receptor kinases with specific signaling pathways. Binds to, and suppresses signals from, the activated insulin receptor (INSR). Potent inhibitor of insulin-stimulated MAPK3 phosphorylation. Plays a critical role regulating PDPK1 membrane translocation in response to insulin stimulation and serves as an adapter protein to recruit PDPK1 to activated insulin receptor, thus promoting PKB/AKT1 phosphorylation and transduction of the insulin signal. This chain is Growth factor receptor-bound protein 14 (GRB14), found in Homo sapiens (Human).